A 150-amino-acid polypeptide reads, in one-letter code: Ribosome maturation factor RimP (150 aa).

Belongs to the RimP family.

The protein localises to the cytoplasm. Functionally, required for maturation of 30S ribosomal subunits. This is Ribosome maturation factor RimP from Salmonella dublin (strain CT_02021853).